The following is a 215-amino-acid chain: Pyrrolidone-carboxylate peptidase (215 aa).

Catalysis depends on residues Glu80, Cys143, and His167.

It belongs to the peptidase C15 family. In terms of assembly, homotetramer.

It is found in the cytoplasm. It catalyses the reaction Release of an N-terminal pyroglutamyl group from a polypeptide, the second amino acid generally not being Pro.. In terms of biological role, removes 5-oxoproline from various penultimate amino acid residues except L-proline. The sequence is that of Pyrrolidone-carboxylate peptidase from Bacillus cereus (strain AH820).